The sequence spans 187 residues: Putative carbonic anhydrase YtiB (187 aa).

Positions 38, 40, 96, and 99 each coordinate Zn(2+).

This sequence belongs to the beta-class carbonic anhydrase family. Zn(2+) serves as cofactor.

It carries out the reaction hydrogencarbonate + H(+) = CO2 + H2O. Functionally, reversible hydration of carbon dioxide. The polypeptide is Putative carbonic anhydrase YtiB (ytiB) (Bacillus subtilis (strain 168)).